The sequence spans 747 residues: ATP-dependent DNA helicase Hel308 (747 aa).

ATP-binding positions include Q29 and 47–54; that span reads VPTASGKT. The Helicase ATP-binding domain maps to 34–200; the sequence is DAGVADGESL…WLDAELVDSS (167 aa). A DEAH box motif is present at residues 145-148; the sequence is DEVH. The 201-residue stretch at 234–434 folds into the Helicase C-terminal domain; sequence PTEAVVRETL…REPSMRTHLL (201 aa). The segment at 711–747 is disordered; it reads AAGHQQPEMDGVTPDADVKESAAAAGTDDGQANLGDF.

The protein belongs to the helicase family. Hel308 subfamily. Monomer.

It carries out the reaction Couples ATP hydrolysis with the unwinding of duplex DNA by translocating in the 3'-5' direction.. The enzyme catalyses ATP + H2O = ADP + phosphate + H(+). In terms of biological role, DNA-dependent ATPase and 3'-5' DNA helicase that may be involved in repair of stalled replication forks. The sequence is that of ATP-dependent DNA helicase Hel308 from Natronomonas pharaonis (strain ATCC 35678 / DSM 2160 / CIP 103997 / JCM 8858 / NBRC 14720 / NCIMB 2260 / Gabara) (Halobacterium pharaonis).